The sequence spans 100 residues: Aspartyl/glutamyl-tRNA(Asn/Gln) amidotransferase subunit C (100 aa).

This sequence belongs to the GatC family. Heterotrimer of A, B and C subunits.

It carries out the reaction L-glutamyl-tRNA(Gln) + L-glutamine + ATP + H2O = L-glutaminyl-tRNA(Gln) + L-glutamate + ADP + phosphate + H(+). The catalysed reaction is L-aspartyl-tRNA(Asn) + L-glutamine + ATP + H2O = L-asparaginyl-tRNA(Asn) + L-glutamate + ADP + phosphate + 2 H(+). Its function is as follows. Allows the formation of correctly charged Asn-tRNA(Asn) or Gln-tRNA(Gln) through the transamidation of misacylated Asp-tRNA(Asn) or Glu-tRNA(Gln) in organisms which lack either or both of asparaginyl-tRNA or glutaminyl-tRNA synthetases. The reaction takes place in the presence of glutamine and ATP through an activated phospho-Asp-tRNA(Asn) or phospho-Glu-tRNA(Gln). The chain is Aspartyl/glutamyl-tRNA(Asn/Gln) amidotransferase subunit C from Streptococcus agalactiae serotype Ia (strain ATCC 27591 / A909 / CDC SS700).